We begin with the raw amino-acid sequence, 115 residues long: Large ribosomal subunit protein bL19 (115 aa).

The protein belongs to the bacterial ribosomal protein bL19 family.

Functionally, this protein is located at the 30S-50S ribosomal subunit interface and may play a role in the structure and function of the aminoacyl-tRNA binding site. This chain is Large ribosomal subunit protein bL19, found in Bacillus licheniformis (strain ATCC 14580 / DSM 13 / JCM 2505 / CCUG 7422 / NBRC 12200 / NCIMB 9375 / NCTC 10341 / NRRL NRS-1264 / Gibson 46).